Reading from the N-terminus, the 316-residue chain is Probable cell division protein WhiA (316 aa).

The H-T-H motif DNA-binding region spans 280 to 313 (SLKELGEMLEPPVGKSGVNHRLRKIEKIAEELRT).

The protein belongs to the WhiA family.

Its function is as follows. Involved in cell division and chromosome segregation. This chain is Probable cell division protein WhiA, found in Clostridium perfringens (strain ATCC 13124 / DSM 756 / JCM 1290 / NCIMB 6125 / NCTC 8237 / Type A).